The primary structure comprises 412 residues: CCA-adding enzyme (412 aa).

Positions 41 and 44 each coordinate ATP. Residues Ser41 and Lys44 each contribute to the CTP site. Asp53, Asp55, and Asp106 together coordinate Mg(2+). 3 residues coordinate ATP: His129, Lys149, and Tyr158. CTP is bound by residues His129, Lys149, and Tyr158.

This sequence belongs to the tRNA nucleotidyltransferase/poly(A) polymerase family. Archaeal CCA-adding enzyme subfamily. As to quaternary structure, homodimer. Requires Mg(2+) as cofactor.

The catalysed reaction is a tRNA precursor + 2 CTP + ATP = a tRNA with a 3' CCA end + 3 diphosphate. The enzyme catalyses a tRNA with a 3' CCA end + 2 CTP + ATP = a tRNA with a 3' CCACCA end + 3 diphosphate. Its function is as follows. Catalyzes the addition and repair of the essential 3'-terminal CCA sequence in tRNAs without using a nucleic acid template. Adds these three nucleotides in the order of C, C, and A to the tRNA nucleotide-73, using CTP and ATP as substrates and producing inorganic pyrophosphate. tRNA 3'-terminal CCA addition is required both for tRNA processing and repair. Also involved in tRNA surveillance by mediating tandem CCA addition to generate a CCACCA at the 3' terminus of unstable tRNAs. While stable tRNAs receive only 3'-terminal CCA, unstable tRNAs are marked with CCACCA and rapidly degraded. This Saccharolobus islandicus (strain Y.N.15.51 / Yellowstone #2) (Sulfolobus islandicus) protein is CCA-adding enzyme.